The primary structure comprises 789 residues: Polyribonucleotide nucleotidyltransferase (789 aa).

Residues Asp-494 and Asp-500 each contribute to the Mg(2+) site. One can recognise a KH domain in the interval 561–620 (PRIESIFINKDKIRNVIGSGGKNIREICEKTGARVEIMQDGTVMIYAINNDAVEYAKNMI). The region spanning 630 to 697 (GKVFDGTVIE…DREYVQLSMR (68 aa)) is the S1 motif domain. The segment at 709–789 (GELYNIRKTN…NEVPRKPRFF (81 aa)) is disordered. Residues 737–749 (SEKKRRGSGRSRR) are compositionally biased toward basic residues. Over residues 763-780 (NNGFGNGNRSFNDNRNGN) the composition is skewed to low complexity.

Belongs to the polyribonucleotide nucleotidyltransferase family. The cofactor is Mg(2+).

Its subcellular location is the cytoplasm. It catalyses the reaction RNA(n+1) + phosphate = RNA(n) + a ribonucleoside 5'-diphosphate. In terms of biological role, involved in mRNA degradation. Catalyzes the phosphorolysis of single-stranded polyribonucleotides processively in the 3'- to 5'-direction. The sequence is that of Polyribonucleotide nucleotidyltransferase from Ehrlichia ruminantium (strain Gardel).